Reading from the N-terminus, the 963-residue chain is Longitudinals lacking protein, isoforms J/P/Q/S/Z (963 aa).

Residues 32 to 97 (VDCTLAAEGK…MYRGEVNISQ (66 aa)) form the BTB domain. 4 disordered regions span residues 115 to 200 (LSDN…SSVL), 228 to 340 (SSGP…ASAS), 447 to 469 (DAQQRDPQDEAGQNEGGESRIRV), and 482 to 520 (GKSSDEPSDKLTQSKKSLISDAKTTNKTSTPIRPKVSTT). Composition is skewed to low complexity over residues 162–175 (SGDVSGSREGSSSP), 228–251 (SSGPAAGTSSQASSTQQQQPLTST), 263–293 (TSSTAAPASGASASAAVQQAHLHQQQAQTTS), and 329–340 (NSATGPNPASAS). A compositionally biased stretch (polar residues) spans 491-512 (KLTQSKKSLISDAKTTNKTSTP). The C2H2-type 1; degenerate zinc finger occupies 849-871 (WVCRNCNRTYKWKNSLKCHLKNE). Residues 878-901 (YFCSKMCGYATNVHSNLKRHLNTK) form a C2H2-type 2; degenerate zinc finger. The interval 900–963 (TKCRDREKDA…YTLVFQNDSA (64 aa)) is disordered. The segment covering 901–915 (KCRDREKDADDEKKP) has biased composition (basic and acidic residues). Positions 937-953 (SSSNNNNNGGGSSTSST) are enriched in low complexity. Residues 954–963 (YTLVFQNDSA) are compositionally biased toward polar residues.

In terms of tissue distribution, by stage 11, isoform Q, isoform P and isoform Z are expressed throughout the mesoderm. From stage 15, expression of isoform P expands to all tissues, whereas expression of isoform Z and isoform Q becomes restricted during later stages; starting from stage 14 to 16, isoform Z is expressed in muscle, and isoform Q and isoform Z are expressed in the CNS. For some isoforms, expression is also seen in specific types of cells in the embryo; isoform Z is expressed in the ventral furrow at stage 5, and isoform Q is expressed around the tracheal pits at stage 11. Isoform Z also shows transient enrichment in a dorsal cell layer in the CNS at stages 13 and 14.

Its subcellular location is the nucleus. Its function is as follows. Putative transcription factor required for axon growth and guidance in the central and peripheral nervous systems. Repels CNS axons away from the midline by promoting the expression of the midline repellent sli and its receptor robo. The sequence is that of Longitudinals lacking protein, isoforms J/P/Q/S/Z from Drosophila melanogaster (Fruit fly).